Here is a 962-residue protein sequence, read N- to C-terminus: MATTAASSASEPEVEPQAGPEAEGEEDEAKPAGVQRKVLSGAVAAEAAEAKGPGWDLQREGASGSDGDEEDAMASSAESSAGEDEWEYDEEEEKNQLEIERLEEQLSINGYDYNCHVELIRLLRLEGELSRVRAARQKMSELFPLTEELWLEWLHDEISMAMDGLDREHVYELFERAVKDYICPNIWLEYGQYSVGGIGQKGGLEKVRSVFERALSSVGLHMTKGLAIWEAYREFESAIVEAARLEKVHSLFRRQLAIPLYEMEATFAEYEEWSEEPMPESVLQSYQKALGQLEKYKPYEEALLQAEAPRLAEYQAYIDFEMKIGDPARIQLIFERALVENCLVPDLWIRYSQYLDRQLKVKDLVLSVHSRAVRNCPWTVALWSRYLLAMERHGLDHQTISATFENALSAGFIQATDYVEIWQVYLDYLRRRVDFRQDSSKELEELRSMFTRALEYLQQEVEERFSESGDPSCLIMQSWARVEARLCNNMQKARELWDSIMTRGNAKYANMWLEYYNLERAHGDTQHCRKALHRAVQCTSDYPEHVCEVLLTMERTEGTLEDWDLAIQKTETRLARVNEQRMKAAEKEAALVQQEEEKAEQRKKVRAEKKALKKKKKTRGADKRREDEDEENEWGEEEEEQPSKRRRTENSLASGEASAMKEETELSGKCLTIDVGPPSKQKEKAASLKRDMPKVAHDSSKDSVTVFVSNLPYSIEEPEVKLRPLFEVCGEVVQIRPIFSNRGDFRGYCYVEFGEEKSAQQALELDRKIVEGRPMFVSPCVDKSKNPDFKVFRYSTTLEKHKLFISGLPFSCTKEELEDICKAHGTVKDLRLVTNRAGKPKGLAYVEYENESQASQAVMKMDGMTIRENVIKVAISNPPQRKVPEKPEVRTAPGAPMLPRQMYGARGKGRTQLSLLPRALQRQGAAPQAENGPAPGPAVAPSVATEAPKMSNADFAKLLLRK.

The span at 1 to 21 (MATTAASSASEPEVEPQAGPE) shows a compositional bias: low complexity. Positions 1-92 (MATTAASSAS…EDEWEYDEEE (92 aa)) are disordered. A2 carries the N-acetylalanine modification. The segment at 2-352 (ATTAASSASE…LVPDLWIRYS (351 aa)) is mediates interaction with PRPF3. Residue S10 is modified to Phosphoserine. Acidic residues predominate over residues 81 to 92 (AGEDEWEYDEEE). HAT repeat units follow at residues 127 to 159 (GELS…DEIS), 165 to 196 (LDRE…YSVG), 202 to 238 (GGLE…FESA), 243 to 276 (ARLE…WSEE), 325 to 357 (GDPA…YLDR), 360 to 392 (KVKD…AMER), 395 to 431 (LDHQ…YLRR), 441 to 474 (KELE…PSCL), and 488 to 521 (NNMQ…LERA). Residue S216 is modified to Phosphoserine. Residues 488-521 (NNMQKARELWDSIMTRGNAKYANMWLEYYNLERA) are required for interaction with USP4. The necessary and sufficient for U6 snRNA binding stretch occupies residues 538-952 (CTSDYPEHVC…VATEAPKMSN (415 aa)). The stretch at 559-618 (TLEDWDLAIQKTETRLARVNEQRMKAAEKEAALVQQEEEKAEQRKKVRAEKKALKKKKKT) forms a coiled coil. Over residues 591–602 (LVQQEEEKAEQR) the composition is skewed to basic and acidic residues. A disordered region spans residues 591–696 (LVQQEEEKAE…SLKRDMPKVA (106 aa)). The required for nuclear localization stretch occupies residues 601–670 (QRKKVRAEKK…KEETELSGKC (70 aa)). A Nuclear localization signal motif is present at residues 602–609 (RKKVRAEK). The segment covering 603–618 (KKVRAEKKALKKKKKT) has biased composition (basic residues). Acidic residues predominate over residues 627-640 (DEDEENEWGEEEEE). S651 bears the Phosphoserine mark. Basic and acidic residues predominate over residues 680 to 696 (KQKEKAASLKRDMPKVA). In terms of domain architecture, RRM 1 spans 704–782 (VTVFVSNLPY…RPMFVSPCVD (79 aa)). A phosphoserine mark is found at S795 and S852. Residues 801-878 (HKLFISGLPF…NVIKVAISNP (78 aa)) enclose the RRM 2 domain. The disordered stretch occupies residues 880–962 (QRKVPEKPEV…ADFAKLLLRK (83 aa)). R906 is modified (omega-N-methylarginine).

In terms of assembly, component of the 7SK snRNP complex at least composed of P-TEFb (composed of CDK9 and CCNT1/cyclin-T1), HEXIM1, HEXIM2, BCDIN3, SART3 proteins and 7SK and U6 snRNAs. Interacts with AGO1 and AGO2. Interacts with PRPF3 and USP4; the interaction with PRPF3 is direct and recruits USP4 to its substrate PRPF3. Interacts with USP15; the interaction is direct. As to expression, ubiquitously expressed, with low level of expression in liver, heart and skeletal. Also detected in hematopoietic cells (at protein level).

The protein resides in the nucleus. It localises to the nucleoplasm. Its subcellular location is the cajal body. The protein localises to the nucleus speckle. It is found in the cytoplasm. In terms of biological role, U6 snRNP-binding protein that functions as a recycling factor of the splicing machinery. Promotes the initial reassembly of U4 and U6 snRNPs following their ejection from the spliceosome during its maturation. Also binds U6atac snRNPs and may function as a recycling factor for U4atac/U6atac spliceosomal snRNP, an initial step in the assembly of U12-type spliceosomal complex. The U12-type spliceosomal complex plays a role in the splicing of introns with non-canonical splice sites. May also function as a substrate-targeting factor for deubiquitinases like USP4 and USP15. Recruits USP4 to ubiquitinated PRPF3 within the U4/U5/U6 tri-snRNP complex, promoting PRPF3 deubiquitination and thereby regulating the spliceosome U4/U5/U6 tri-snRNP spliceosomal complex disassembly. May also recruit the deubiquitinase USP15 to histone H2B and mediate histone deubiquitination, thereby regulating gene expression and/or DNA repair. May play a role in hematopoiesis probably through transcription regulation of specific genes including MYC. The chain is Spliceosome associated factor 3, U4/U6 recycling protein from Mus musculus (Mouse).